The following is a 548-amino-acid chain: Cytochrome P450 monooxygenase lcsK (548 aa).

Transmembrane regions (helical) follow at residues 28 to 48 (HAYP…LWAF) and 68 to 88 (VLLF…RLFF). 4 N-linked (GlcNAc...) asparagine glycosylation sites follow: asparagine 172, asparagine 223, asparagine 242, and asparagine 404. Cysteine 487 provides a ligand contact to heme.

This sequence belongs to the cytochrome P450 family. The cofactor is heme.

Its subcellular location is the membrane. Its pathway is secondary metabolite biosynthesis. Its function is as follows. Cytochrome P450 monooxygenase; part of the gene cluster that mediates the biosynthesis of the lipopeptide antibiotics leucinostatins that show extensive biological activities, including antimalarial, antiviral, antibacterial, antifungal, and antitumor activities, as well as phytotoxic. Leucinostatin A contains nine amino acid residues, including the unusual amino acid 4-methyl-L-proline (MePro), 2-amino-6-hydroxy-4-methyl-8-oxodecanoic acid (AHyMeOA), 3-hydroxyleucine (HyLeu), alpha-aminoisobutyric acid (AIB), beta-Ala, a 4-methylhex-2-enoic acid at the N-terminus as well as a N1,N1-dimethylpropane-1,2-diamine (DPD) at the C-terminus. The biosynthesis of leucinostatins is probably initiated with the assembly of 4-methylhex-2-enoic acid by a reducing PKS. Two reducing polyketide synthases, lcsB and lcsC, have been identified in the cluster and it is not clear which is the one that assembles 4-methylhex-2-enoic acid since both contain KS, AT, DH, cMT, ER, KR and ACP domains. The polyketide residue might be transferred to the NRPS lcsA, mediated by two additional enzymes, the acyl-CoA ligase lcsD and the thioesterase lcsE. The linear polyketide carboxylic acid, which is released from PKS, is converted to a CoA thioester by lcsD, and then lcsE hydrolyzes the thiol bond and shuttles the polyketide intermediate to lcsA. The C domain of the first module catalyzed the condensation of 4-methylhex-2-enoic acid and MePro carried by domain A1, followed by successive condensations of nine amino acids to trigger the elongation of the linear peptide. A5 and A6 domains of lcsA are proposed to incorporate leucine, A2 AHyMeOA, and A3 incorporates HyLeu. A4, A7 and A8 incorporate AIB. The AHyMeOA in leucinostatin A activated by the A2 might be produced by the second PKS (lcsB or lcsC) present within the cluster. The MePro is probably produced via leucine cyclization and may originate from a separate pathway, independent of the cluster. Another nonproteinogenic amino acid, beta-Ala, could be produced by an aspartic acid decarboxylase also localized outside of the cluster. Two candidates are VFPBJ_01400 and VFPBJ_10476. The final peptide scaffold may be released by the NAD(P)H-dependent thioester reductase (TE) at the C-terminal region of lcsA. Transamination of the lcsA product by the transaminase lcsP may produce DPD at the C-terminus. Further hydroxylation steps performed alternatively by the cytochrome P450 monooxygenases lcsI, lcsK and lcsN then yield the non-methylated leucinostatins precursor. It is also possible that leucines can be hydroxylated prior to their incorporation into the peptide. Varying extents of methylation then lead to the formation of leucinostatins A and B. In Purpureocillium lilacinum (Paecilomyces lilacinus), this protein is Cytochrome P450 monooxygenase lcsK.